The primary structure comprises 408 residues: Argininosuccinate synthase (408 aa).

Residues 10–18 (AYSGGLDTS) and A37 contribute to the ATP site. Residues Y90 and S95 each contribute to the L-citrulline site. ATP is bound at residue G120. Positions 122, 126, and 127 each coordinate L-aspartate. L-citrulline is bound at residue N126. R130, S181, S190, E266, and Y278 together coordinate L-citrulline.

It belongs to the argininosuccinate synthase family. Type 1 subfamily. As to quaternary structure, homotetramer.

Its subcellular location is the cytoplasm. It carries out the reaction L-citrulline + L-aspartate + ATP = 2-(N(omega)-L-arginino)succinate + AMP + diphosphate + H(+). Its pathway is amino-acid biosynthesis; L-arginine biosynthesis; L-arginine from L-ornithine and carbamoyl phosphate: step 2/3. The chain is Argininosuccinate synthase from Cereibacter sphaeroides (strain ATCC 17029 / ATH 2.4.9) (Rhodobacter sphaeroides).